The primary structure comprises 418 residues: Nuclear hormone receptor 114 (418 aa).

Positions 12-87 (DHVCLVCQDF…VGMDRNALQQ (76 aa)) form a DNA-binding region, nuclear receptor. 2 NR C4-type zinc fingers span residues 15–35 (CLVC…CVGC) and 51–70 (CQFE…CRYC). The tract at residues 89–130 (RDPIGYTKRTRRPKKELKTTSDCSSDEGASTPPSVSPLQLSP) is disordered. An NR LBD domain is found at 170–409 (PIRSLHEALC…AFARQLFFGD (240 aa)). Residues 398 to 409 (FSAFARQLFFGD) are AF-2.

The protein belongs to the nuclear hormone receptor family. Expressed in germ and intestinal cells and at low levels in the hypodermis.

It is found in the nucleus. Probable transcription factor which may have a role in detoxifying dietary metabolites arising from bacterial tryptophan metabolism. Required for fertility and involved in proper postembryonic germline development, especially germline stem cell (GSC) proliferation. Required for activation of the methionine/S-adenosylmethionine (Met/SAM) cycle in response to low levels of SAM. The chain is Nuclear hormone receptor 114 from Caenorhabditis elegans.